We begin with the raw amino-acid sequence, 1345 residues long: DNA-directed RNA polymerase subunit beta (1345 aa).

The protein belongs to the RNA polymerase beta chain family. The RNAP catalytic core consists of 2 alpha, 1 beta, 1 beta' and 1 omega subunit. When a sigma factor is associated with the core the holoenzyme is formed, which can initiate transcription.

The catalysed reaction is RNA(n) + a ribonucleoside 5'-triphosphate = RNA(n+1) + diphosphate. Its function is as follows. DNA-dependent RNA polymerase catalyzes the transcription of DNA into RNA using the four ribonucleoside triphosphates as substrates. The protein is DNA-directed RNA polymerase subunit beta of Shewanella sp. (strain ANA-3).